Reading from the N-terminus, the 225-residue chain is Ribonuclease 3 (225 aa).

The 123-residue stretch at 5–127 (VTELYKTIDY…IIGAVFLDSD (123 aa)) folds into the RNase III domain. Glutamate 40 lines the Mg(2+) pocket. Aspartate 44 is an active-site residue. Mg(2+)-binding residues include aspartate 113 and glutamate 116. Glutamate 116 is an active-site residue. In terms of domain architecture, DRBM spans 154-223 (DPKTLLQEHL…AEKALKILKN (70 aa)).

Belongs to the ribonuclease III family. As to quaternary structure, homodimer. Mg(2+) serves as cofactor.

Its subcellular location is the cytoplasm. It carries out the reaction Endonucleolytic cleavage to 5'-phosphomonoester.. Its function is as follows. Digests double-stranded RNA. Involved in the processing of primary rRNA transcript to yield the immediate precursors to the large and small rRNAs (23S and 16S). Processes some mRNAs, and tRNAs when they are encoded in the rRNA operon. Processes pre-crRNA and tracrRNA of type II CRISPR loci if present in the organism. This is Ribonuclease 3 from Pseudoalteromonas translucida (strain TAC 125).